Here is a 222-residue protein sequence, read N- to C-terminus: MARFHIILGLVVCFFAWIFFLIFPNLDIQFAGHFYNSSAHQFIGGYDGFLGFLHWFARFFPIFFSIIVILFLLGSLFIDKFKIKYRKAIFFIAVCLWIGPGLVVNYVFKDHWGRPRPVMVEQFNGDKIFQPPFVISSQCDKNCSFVCGDASMGFWLFAFMPLLATRKKKLVAFIAAVVAGGGLGLMRMSQGGHFFSDVVFCGIFVYISTWVVYALMYRKKEY.

Residues 1–3 are Cytoplasmic-facing; the sequence is MAR. The helical transmembrane segment at 4–24 threads the bilayer; it reads FHIILGLVVCFFAWIFFLIFP. At 25–58 the chain is on the periplasmic side; sequence NLDIQFAGHFYNSSAHQFIGGYDGFLGFLHWFAR. The helical transmembrane segment at 59–79 threads the bilayer; that stretch reads FFPIFFSIIVILFLLGSLFID. The Cytoplasmic portion of the chain corresponds to 80–87; that stretch reads KFKIKYRK. The helical transmembrane segment at 88-108 threads the bilayer; it reads AIFFIAVCLWIGPGLVVNYVF. The Periplasmic portion of the chain corresponds to 109–144; that stretch reads KDHWGRPRPVMVEQFNGDKIFQPPFVISSQCDKNCS. The chain crosses the membrane as a helical span at residues 145–165; the sequence is FVCGDASMGFWLFAFMPLLAT. At 166 to 169 the chain is on the cytoplasmic side; sequence RKKK. The chain crosses the membrane as a helical span at residues 170-190; it reads LVAFIAAVVAGGGLGLMRMSQ. Topologically, residues 191–193 are periplasmic; sequence GGH. A helical membrane pass occupies residues 194 to 214; it reads FFSDVVFCGIFVYISTWVVYA. The Cytoplasmic portion of the chain corresponds to 215 to 222; the sequence is LMYRKKEY.

This sequence belongs to the lipid A LpxF 4'-phosphatase family.

The protein localises to the cell inner membrane. The protein operates within bacterial outer membrane biogenesis; LPS lipid A biosynthesis. Its function is as follows. Removes the 4'-phosphate moiety from lipid IV(A) (a tetraacylated precursor of lipid A) and from pentaacylated lipid A, but not from hexaacylated lipid A (as is found in E.coli). Does not dephosphorylate phosphatidic acid, phosphatidylglycerophosphate, or the 1-phosphate group of lipid A and lipid A precursors. Its expression in E.coli confers resistance to the cationic antimicrobial peptide (CAMP) polymyxin B. Plays a critical role in the ability of the bacteria to avoid the host's innate immune system, especially the bactericidal action of CAMPs, although whether it is CAMP-sensitivity or increased sensitivity to the immune system is not clear. The protein is Lipid A 4'-phosphatase of Francisella tularensis subsp. novicida (strain U112).